A 425-amino-acid chain; its full sequence is tRNA (guanine-N(7)-)-methyltransferase non-catalytic subunit wuho (425 aa).

The interval 67-102 (ATCAGKEPGGKEQQLTKQPEEGGTTASGSGVTSTSV) is disordered. A compositionally biased stretch (low complexity) spans 88–102 (GGTTASGSGVTSTSV). WD repeat units follow at residues 97–138 (VTST…ARLL), 142–181 (PLAR…APPR), 185–224 (GHLS…DIHS), 228–266 (GHRE…ELLQ), and 325–365 (AGSW…PATS).

It belongs to the WD repeat TRM82 family. Forms a heterodimer with the catalytic subunit Mettl1. Interacts with mei-P26 and weakly interacts with bgcn; required for the function or formation of the mei-P26-bgcn-bam-sxl complex. Interacts with nanos; may be involved in mei-P26-dependent derepression of the BMP signaling pathway. Interacts with Myc; the interaction may be mediated by mei-P26 and may be involved in the regulation of ribosome biogenesis. In testis, it is present at high level in hub cells, a niche for germline stem cells of testis. Ubiquitously expressed in all testicular cells throughout spermatogenesis. Ubiquitously expressed in all germline and somatic cells of the ovary.

The protein resides in the nucleus. It is found in the cytoplasm. Its pathway is tRNA modification; N(7)-methylguanine-tRNA biosynthesis. Functionally, required for the Mettl1-dependent formation of N(7)-methylguanine at position 46 (m7G46) in tRNA. In the Mettl1-wuho methyltransferase complex, it is required to stabilize and induce conformational changes of the catalytic subunit. Required for binding of nanos mRNA and repression of translation by the mei-P26-bgcn-bam-sxl complex. May cooperate with mei-P26 and nanos to derepress the BMP signaling pathway. May cooperate with mei-P26 to suppress expression of a subset of microRNAs. May cooperate with mei-P26 to regulate bam expression levels in germline cells during gametogenesis. Required to promote mitosis to meiosis transition during gametogenesis. May regulate germline cell division in part by regulating ribosome biogenesis. In Drosophila yakuba (Fruit fly), this protein is tRNA (guanine-N(7)-)-methyltransferase non-catalytic subunit wuho.